The chain runs to 864 residues: Dynamin-1 (864 aa).

Residues 28-294 enclose the Dynamin-type G domain; sequence DLDLPQIAVV…LTNHIRDTLP (267 aa). Residues 38 to 45 are G1 motif; it reads GGQSAGKS. GDP contacts are provided by Ser41, Gly43, Lys44, Ser45, Ser46, Arg59, and Gly60. The segment at 64-66 is G2 motif; that stretch reads VTR. The residue at position 80 (Tyr80) is a Phosphotyrosine. 3'-nitrotyrosine; alternate is present on Tyr125. Position 125 is a phosphotyrosine; alternate (Tyr125). A G3 motif region spans residues 136-139; the sequence is DLPG. The tract at residues 205-208 is G4 motif; the sequence is TKLD. GDP is bound by residues Lys206, Asp208, Asp211, Asn236, Arg237, and Gln239. Residues 235–238 form a G5 motif region; that stretch reads VNRS. Residues Ser306 and Ser347 each carry the phosphoserine modification. Phosphotyrosine is present on Tyr354. A Phosphoserine modification is found at Ser512. Positions 519 to 625 constitute a PH domain; that stretch reads LVIRKGWLTI…WKASFLRAGV (107 aa). Positions 659 to 750 constitute a GED domain; sequence VETIRNLVDS…IIGDINTTTV (92 aa). Residues 767–864 form a disordered region; that stretch reads SVPAGRRSPT…PESPRPPFDL (98 aa). A Phosphoserine; by GSK3-beta modification is found at Ser774. Ser778 is subject to Phosphoserine. Position 796 is an omega-N-methylarginine (Arg796). Phosphoserine is present on Ser822. Pro residues predominate over residues 825-843; the sequence is PFGPPPQVPSRPNRAPPGV. A phosphoserine mark is found at Ser851 and Ser857.

It belongs to the TRAFAC class dynamin-like GTPase superfamily. Dynamin/Fzo/YdjA family. As to quaternary structure, homodimer; homodimerization is mediated by the dynamin-type G domain which promotes assembly-stimulated GTPase activity. Homo-tetramer formed from two dimers in the absence of lipid. Oligomerizes into a helical polymer that self-assembles around the vesicle membrane, when associated to the menbrane through lipid binding. Interacts (via C-terminal proline-rich domain (PRD)) with SNX9 (via SH3 domain); this interaction allows regulation of DNM1 self-assembly during late stages of endocytic vesicle formation and supports DNM1's early functions in accelerating clathrin-coated pits (CCPs) maturation in non neuronals cell. Interacts (via C-terminal proline-rich domain (PRD)) with MYO1E (via SH3 domain); this interaction regulates receptor-mediated endocytosis. Interacts with SNX33 (via SH3 domain); this interaction decreases DNM1-dependent endocytosis. Interacts with DIAPH1. Interacts with GRB2 (via SH3 domain); this interaction mediates disassembly of DNM1 polymers, therefore modulates self-assembly. Forms a complex with BIN1 (via SH3 domain) and SH3GL2 (via SH3 domain). Forms a complex with SH3GL2 (via SH3 domain) and AMPH (via SH3 domain). Forms a complex with SH3GL2 (via SH3 domain) and SYNJ1. Interacts with AMPH. Interacts (via C-terminal proline-rich domain (PRD)) with SYT1; this interaction facilitates vesicle fission during clathrin-mediated endocytosis (CME). Interacts (via C-terminal proline-rich domain (PRD)) with PLCG1 (via SH3 domain); this interaction stimulates the release of GDP from DNM1 and enhances DNM1-dependent endocytosis. Interacts with SNPH; this interaction inhibits the binding of DNM1 to AMPH and DNM1-receptor-mediated endocytosis. Interacts with CAV1. Interacts with SH3GLB1 (via SH3 domain). Interacts with PACSIN1 (via SH3 domain), PACSIN2 (via SH3 domain) and PACSIN3 (via SH3 domain). Interacts with UNC119; this interaction decreases DNM1's GTPase activity and affects DNM1's interaction with AMPH. Interacts (GTP-bound form) with DNAJC6; this interaction allows clathrin-coated vesicle (CCV) formation at the plasma membrane. In terms of processing, phosphorylation at Ser-774 by GSK3B/GSK3-beta leads to inactivation of receptor-mediated endocytosis in non-neuronal cells. Dephosphorylation at Ser-774, through the EGFR downstream signaling, leads to activation and regulates early stages of clathrin-mediated endocytosis (CME). Phosphorylated by CDK5 leading to synaptic vesicle endocytosis (SVE) activation.

Its subcellular location is the cell membrane. The protein localises to the membrane. It is found in the clathrin-coated pit. The protein resides in the cytoplasmic vesicle. It localises to the presynapse. Its subcellular location is the secretory vesicle. The protein localises to the chromaffin granule. It catalyses the reaction GTP + H2O = GDP + phosphate + H(+). Its activity is regulated as follows. GTPase activity is activated by 1-phosphatidyl-1D-myo-inositol 4,5-bisphosphate. GTPase activity is inhibited by the heterodimer G protein formed by GNB1 and GNG2 with an IC(50)=400 nM when DNM1 concentration is 5 nM. Catalyzes the hydrolysis of GTP and utilizes this energy to mediate vesicle scission and participates in many forms of endocytosis, such as clathrin-mediated endocytosis or synaptic vesicle endocytosis as well as rapid endocytosis (RE). Associates to the membrane, through lipid binding, and self-assembles into rings and stacks of interconnected rings through oligomerization to form a helical polymer around the vesicle membrane leading to constriction of invaginated coated pits around their necks. Self-assembly of the helical polymer induces membrane tubules narrowing until the polymer reaches a length sufficient to trigger GTP hydrolysis. Depending on the curvature imposed on the tubules, membrane detachment from the helical polymer upon GTP hydrolysis can cause spontaneous hemifission followed by complete fission. May play a role in regulating early stages of clathrin-mediated endocytosis in non-neuronal cells through its activation by dephosphorylation via the signaling downstream of EGFR. Controls vesicle size at a step before fission, during formation of membrane pits, at hippocampal synapses. Controls plastic adaptation of the synaptic vesicle recycling machinery to high levels of activity. Mediates rapid endocytosis (RE), a Ca(2+)-dependent and clathrin- and K(+)-independent process in chromaffin cells. Microtubule-associated force-producing protein involved in producing microtubule bundles and able to bind and hydrolyze GTP. Through its interaction with DNAJC6, acts during the early steps of clathrin-coated vesicle (CCV) formation. In Homo sapiens (Human), this protein is Dynamin-1.